The sequence spans 244 residues: tRNA (guanine-N(1)-)-methyltransferase (244 aa).

S-adenosyl-L-methionine-binding positions include glycine 112 and 131-136; that span reads IGDFIV.

It belongs to the RNA methyltransferase TrmD family. Homodimer.

It localises to the cytoplasm. The catalysed reaction is guanosine(37) in tRNA + S-adenosyl-L-methionine = N(1)-methylguanosine(37) in tRNA + S-adenosyl-L-homocysteine + H(+). In terms of biological role, specifically methylates guanosine-37 in various tRNAs. This chain is tRNA (guanine-N(1)-)-methyltransferase, found in Clostridium kluyveri (strain NBRC 12016).